Here is a 165-residue protein sequence, read N- to C-terminus: MADFDEIYEEEEDEERALEEQLLKYSPDPVVVRGSGHVTVFGLSNKFESEFPSSLTGKVAPEEFKASINRVNSCLKKNLPVNVRWLLCGCLCCCCTLGCSMWPVICLSKRTRRSIEKLLEWENNRLYHKLCLHWRLSKRKCETNNMMEYVILIEFLPKTPIFRPD.

A coiled-coil region spans residues methionine 1–serine 26. The short motif at cysteine 88–cysteine 106 is the CHIC motif (Cys-rich) element.

The protein belongs to the CHIC family. In terms of processing, palmitoylation in the CHIC motif is required for membrane association.

It is found in the cell membrane. It localises to the cytoplasmic vesicle. The protein is Cysteine-rich hydrophobic domain-containing protein 2 (CHIC2) of Homo sapiens (Human).